The sequence spans 778 residues: ATP synthase subunit beta (778 aa).

The interval Met1–Leu289 is unknown. The ATP synthase subunit beta stretch occupies residues Met290 to Asn778. Residue Gly447 to Thr454 coordinates ATP.

The protein belongs to the ATPase alpha/beta chains family. F-type ATPases have 2 components, CF(1) - the catalytic core - and CF(0) - the membrane proton channel. CF(1) has five subunits: alpha(3), beta(3), gamma(1), delta(1), epsilon(1). CF(0) has three main subunits: a(1), b(2) and c(9-12). The alpha and beta chains form an alternating ring which encloses part of the gamma chain. CF(1) is attached to CF(0) by a central stalk formed by the gamma and epsilon chains, while a peripheral stalk is formed by the delta and b chains.

The protein resides in the cell membrane. It carries out the reaction ATP + H2O + 4 H(+)(in) = ADP + phosphate + 5 H(+)(out). Produces ATP from ADP in the presence of a proton gradient across the membrane. The catalytic sites are hosted primarily by the beta subunits. This chain is ATP synthase subunit beta (atpD), found in Malacoplasma penetrans (strain HF-2) (Mycoplasma penetrans).